We begin with the raw amino-acid sequence, 166 residues long: Ribosome maturation factor RimM (166 aa).

A PRC barrel domain is found at 94-166 (GDEYYWRDLM…EMVVRLLPGL (73 aa)).

Belongs to the RimM family. As to quaternary structure, binds ribosomal protein uS19.

The protein resides in the cytoplasm. Its function is as follows. An accessory protein needed during the final step in the assembly of 30S ribosomal subunit, possibly for assembly of the head region. Essential for efficient processing of 16S rRNA. May be needed both before and after RbfA during the maturation of 16S rRNA. It has affinity for free ribosomal 30S subunits but not for 70S ribosomes. This Syntrophus aciditrophicus (strain SB) protein is Ribosome maturation factor RimM.